An 838-amino-acid chain; its full sequence is U1 SNP1-associating protein 1 (838 aa).

The Cytoplasmic segment spans residues 1 to 536 (MSEYLAQTPC…VRPLRNSFPL (536 aa)). Residues 31–240 (HPLSTVGRLL…DFAPAHNSFF (210 aa)) are required for ERAD-L function. Residues 259-318 (ERFVLEFISDATLSITQMNVKPDTTVKQVKDFICSVYTHSLNLRRNDIKLIYKGQLLHEN) enclose the Ubiquitin-like domain. The tract at residues 319 to 418 (NFAGNSSKIS…VPTDELYRKC (100 aa)) is important for HRD1 oligomer formation. Positions 345–535 (QEYTESGPGF…VVRPLRNSFP (191 aa)) are interaction with HRD1. 3 positions are modified to phosphoserine: S374, S376, and S379. The segment at 437–490 (SSYLSVIKGDYGEIKIPISSNDYRINGDNILLSPSAIEQLESALNFKIERPRDS) is required for ERAD-L function and HRD1 oligomer formation. A helical membrane pass occupies residues 537 to 559 (LLVLIRTFYLIGYNSLVPFFIIL). Over 560 to 563 (EFGS) the chain is Extracellular. Residues 564–583 (FLPWKYIILLSLLFIFRTVW) traverse the membrane as a helical segment. Residues 584-838 (NTQEVWNLWR…QPHLYIPDED (255 aa)) are Cytoplasmic-facing. Residues 584-838 (NTQEVWNLWR…QPHLYIPDED (255 aa)) are interaction with DER1. A disordered region spans residues 795 to 838 (ARDREQPAPSAQQQENEDEALIIPDEEEPTATGAQPHLYIPDED). A compositionally biased stretch (acidic residues) spans 809 to 823 (ENEDEALIIPDEEEP).

Component of the HRD1 ubiquitin ligase complex which contains the E3 ligase HRD1, its cofactors HRD3, USA1 and DER1, substrate recruiting factor YOS9 and CDC48-binding protein UBX2. Within the complex, interacts directly with HRD1 (via N-terminus) and DER1 (via C-terminus) and indirectly with HRD3. In ERAD-L, HRD3 and YOS9 jointly bind misfolded glycoproteins in the endoplasmic reticulum (ER) lumen. Movement of ERAD-L substrates through the ER membrane is facilitated by HRD1 and DER1 which have lateral gates facing each other and which distort the membrane region between the lateral gates, making it much thinner than a normal phospholipid bilayer. Substrates insert into the membrane as a hairpin loop with one strand interacting with DER1 and the other with HRD1. The HRD1 complex interacts with the heterotrimeric CDC48-NPL4-UFD1 ATPase complex which is recruited by UBX2 via its interaction with CDC48 and which moves ubiquitinated substrates to the cytosol for targeting to the proteasome.

The protein resides in the endoplasmic reticulum membrane. Scaffold protein of the endoplasmic reticulum-associated degradation (ERAD) (also known as endoplasmic reticulum quality control, ERQC) pathway involved in ubiquitin-dependent degradation of misfolded endoplasmic reticulum proteins. Component of the HRD1 ubiquitin ligase complex, which is part of the ERAD-L and ERAD-M pathways responsible for the rapid degradation of soluble lumenal and membrane proteins with misfolded lumenal domains (ERAD-L), or ER-membrane proteins with misfolded transmembrane domains (ERAD-M). Has multiple functions in ERAD including recruitment of DER1 to the HRD1 ubiquitin ligase, and regulation of HRD1 activity. Involved in oligomerization of HRD1 and in HRD1 autoubiquitination and degradation. This is U1 SNP1-associating protein 1 (USA1) from Saccharomyces cerevisiae (strain ATCC 204508 / S288c) (Baker's yeast).